The sequence spans 185 residues: Photosystem I assembly protein Ycf4 (185 aa).

The next 2 helical transmembrane spans lie at 24 to 44 (YIIG…SISS) and 66 to 86 (IIMG…WYLV).

This sequence belongs to the Ycf4 family.

The protein localises to the cellular thylakoid membrane. In terms of biological role, seems to be required for the assembly of the photosystem I complex. The polypeptide is Photosystem I assembly protein Ycf4 (Prochlorococcus marinus (strain MIT 9301)).